Consider the following 183-residue polypeptide: Putative manganese efflux pump MntP (183 aa).

Transmembrane regions (helical) follow at residues 8–28 (MIALSLMALALGMDAFSVALG), 39–59 (IFYIGLTIGLFHIFMPLVGMA), 68–88 (FGSIATYAGGVLLLWLGGQMI), 108–128 (LFFAFSVSLDSFSVGLSLGIF), 133–153 (MATILLFGLFSTVLTWIGLLV), and 162–182 (GSYSEALGGSILLVFGLKLLF).

It belongs to the MntP (TC 9.B.29) family.

The protein localises to the cell membrane. Its function is as follows. Probably functions as a manganese efflux pump. The protein is Putative manganese efflux pump MntP of Geobacillus thermodenitrificans (strain NG80-2).